Consider the following 492-residue polypeptide: Serine/threonine-protein kinase 3 (492 aa).

The Protein kinase domain maps to 26–277 (FDVLEKLGEG…ATQLLQHPFI (252 aa)). ATP-binding positions include 32–40 (LGEGSYGSV) and lysine 55. Aspartate 145 (proton acceptor) is an active-site residue. Residue threonine 179 is modified to Phosphothreonine; by autocatalysis. Coiled-coil stretches lie at residues 286 to 328 (LRDL…TMVK) and 443 to 476 (NLDFEELQMRLTALDPMMEREIEELRQRYTAKRQ). Residues 297–307 (KAKRQQEQQRE) show a composition bias toward basic and acidic residues. Positions 297-339 (KAKRQQEQQRELEEDDENSEEEVEVDSHTMVKSGSESAGTMRA) are disordered. The span at 308-320 (LEEDDENSEEEVE) shows a compositional bias: acidic residues. The span at 326-339 (MVKSGSESAGTMRA) shows a compositional bias: polar residues. In terms of domain architecture, SARAH spans 438–485 (FDFLKNLDFEELQMRLTALDPMMEREIEELRQRYTAKRQPILDAMDAK).

It belongs to the protein kinase superfamily. STE Ser/Thr protein kinase family. STE20 subfamily. As to quaternary structure, homodimer; mediated via the coiled-coil region. The cofactor is Mg(2+).

It localises to the cytoplasm. The protein resides in the nucleus. The catalysed reaction is L-seryl-[protein] + ATP = O-phospho-L-seryl-[protein] + ADP + H(+). The enzyme catalyses L-threonyl-[protein] + ATP = O-phospho-L-threonyl-[protein] + ADP + H(+). With respect to regulation, inhibited by the C-terminal non-catalytic region. Activated by caspase-cleavage. Full activation also requires homodimerization and autophosphorylation of Thr-179. In terms of biological role, stress-activated, pro-apoptotic kinase which, following caspase-cleavage, enters the nucleus and induces chromatin condensation followed by internucleosomal DNA fragmentation. Key component of the Hippo signaling pathway which plays a pivotal role in organ size control and tumor suppression by restricting proliferation and promoting apoptosis. The core of this pathway is composed of a kinase cascade wherein stk3/mst2 and stk4/mst1, in complex with its regulatory protein sav1, phosphorylates and activates lats1/2 in complex with its regulatory protein mob1, which in turn phosphorylates and inactivates yap1 oncoprotein and wwtr1/taz. Phosphorylation of yap1 by lats2 inhibits its translocation into the nucleus to regulate cellular genes important for cell proliferation, cell death, and cell migration. This Danio rerio (Zebrafish) protein is Serine/threonine-protein kinase 3 (stk3).